The following is a 154-amino-acid chain: Egg-lysin (154 aa).

Residues 1–18 form the signal peptide; sequence MKLLVLCIFAMMATLAMS.

In terms of assembly, homodimer. As to expression, sperm.

Its function is as follows. Dissolves the egg vitelline layer nonenzymatically during fertilization. It creates a hole of about 3 mu-m in diameter through which the sperm pass. The protein is Egg-lysin of Haliotis walallensis (Flat abalone).